The following is an 837-amino-acid chain: MVKVKSKKNSLTSSLDNKIVDLIYRLLEEKTLDRKRSLRQESQGEEGENNEGEEDEDIFESMFFAKDLTAGEIFTFCLTKDLSLQRVKKVVLQKTIDRMLKDVIESELEEFGSYPGYNNEEEEKPSLEEELAKKNMMIERDTNEMNKRITSTWSKSGSVSESITETDDPKTEEVKKSKKRSKEGTCKVKRQKIKEDRSPPNSSLKSLGGMDDVVAQLMELIGLPILHPEIFLSTGVEPPRGVLLHGPPGCGKTSIANALAGELQVPFISISAPSVVSGMSGESEKKIRDLFDEARSLAPCLVFFDEIDAITPKRDGGAQREMERRIVAQLLTSMDELTMEKTNGKPVIIIGATNRPDSLDAALRRAGRFDREICLNVPNEVSRLHILKKMSDNLKIDGAIDFAKLAKLTPGFVGADLKALVTAAGTCAIKRIFQTYANIKSTPTTATDSSEDNMEIDETANGDESSLKNTANMIDPLPLSVVQQFIRNYPEPLSGEQLSLLSIKYEDFLKALPTIQPTAKREGFATVPDVTWANVGALQRVRLELNMAIVQPIKRPELYEKVGISAPGGVLLWGPPGCGKTLLAKAVANESRANFISIKGPELLNKYVGESERSIRQVFTRARASVPCVIFFDELDALVPRRDTSLSESSSRVVNTLLTELDGLNDRRGIFVIGATNRPDMIDPAMLRPGRLDKSLFIELPNTEEKLDIIKTLTKSHGTPLSSDVDFEEIIRNEKCNNFSGADLAALVRESSVLALKRKFFQSEEIQSVLDNDLDKEFEDLSVGVSGEEIIVTMSDFRSALRKIKPSVSDKDRLKYDRLNKKMGLTEEMKDAEEMKQ.

Disordered stretches follow at residues Arg-36 to Glu-56 and Ile-149 to Leu-207. Phosphoserine is present on Ser-42. Positions Gln-43–Glu-56 are enriched in acidic residues. Residues Ile-149–Ile-163 show a composition bias toward polar residues. A compositionally biased stretch (basic residues) spans Lys-176 to Lys-192. Gly-246–Thr-253 contacts ATP. The segment at Pro-443–Lys-468 is disordered. Over residues Ser-449–Asn-461 the composition is skewed to acidic residues. Gly-574–Thr-581 serves as a coordination point for ATP.

This sequence belongs to the AAA ATPase family.

It is found in the nucleus. It localises to the nucleolus. Its function is as follows. Involved in ribosome biogenesis. Seems to be required for restructuring nucleoplasmic 60S pre-ribosomal particles to make them competent for nuclear export. The chain is Ribosome biogenesis ATPase RIX7 (RIX7) from Saccharomyces cerevisiae (strain ATCC 204508 / S288c) (Baker's yeast).